Reading from the N-terminus, the 947-residue chain is Pyruvate, phosphate dikinase 1, chloroplastic (947 aa).

Residues 1–71 (MPSVSRAVCV…PLRAVAAPIP (71 aa)) constitute a chloroplast transit peptide. Positions 39-60 (RHGKPEVAIRSGSGGSARGGHC) are disordered. Thr527 carries the post-translational modification Phosphothreonine; by PDRP1. Residue His529 is the Tele-phosphohistidine intermediate of the active site. Positions 635, 692, 821, 842, 843, 844, and 845 each coordinate substrate. Residue Glu821 participates in Mg(2+) binding. Residue Asp845 coordinates Mg(2+). Cys907 acts as the Proton donor in catalysis.

Belongs to the PEP-utilizing enzyme family. Homotetramer. Mg(2+) is required as a cofactor. Post-translationally, phosphorylation of Thr-527 in the dark inactivates the enzyme. Dephosphorylation upon light stimulation reactivates the enzyme. Phosphorylation increases during the first 20 days post-pollination and then remains constant through the 40-day mature seed stage. Reactivation by dephosphorylation during germination is negligible. As to expression, isoform 1 is only expressed in green leaves. Isoform 2 is found in roots, stems, rachis branches, leaf sheaths, green leaves and spikelets. The non-phosphorylated PPDK in mature seeds is endosperm-localized.

It localises to the plastid. The protein resides in the chloroplast. Its subcellular location is the cytoplasm. The catalysed reaction is pyruvate + phosphate + ATP = phosphoenolpyruvate + AMP + diphosphate + H(+). Activated by light-induced dephosphorylation. Inhibited by dark-induced phosphorylation. Both reactions are catalyzed by PDRP1. Formation of phosphoenolpyruvate. The cytoplasmic isoform supports the biosynthetic processes in the nascent endosperm and provides an efficient mechanism for glycolytic ATP synthesis in oxygen depleted tissues. May be involved in regulating the flux of carbon into starch and fatty acids of seeds and in the remobilization of nitrogen reserves in senescing leaves. This chain is Pyruvate, phosphate dikinase 1, chloroplastic (PPDK1), found in Oryza sativa subsp. japonica (Rice).